A 408-amino-acid chain; its full sequence is Tripartite motif containing 13 (408 aa).

An RING-type zinc finger spans residues 10–58 (CPICCSLFDDPRVLPCSHNFCKKCLDGVLEENSRTMQWRPSSFKCPTCR). The segment at 89–131 (PKMPVCKEHSDQPLNIFCSTDLKLICGSCATTGEHKKHVFSSI) adopts a B box-type zinc-finger fold. Residues C94, H97, C117, and H123 each contribute to the Zn(2+) site. Residues 322–342 (ILVVACLILLLVTFLCAYPFI) form a helical membrane-spanning segment.

The protein resides in the endoplasmic reticulum membrane. It participates in protein modification; protein ubiquitination. E3 ubiquitin ligase involved in the retrotranslocation and turnover of membrane and secretory proteins from the ER through a set of processes named ER-associated degradation (ERAD). This process acts on misfolded proteins as well as in the regulated degradation of correctly folded proteins. In Xenopus tropicalis (Western clawed frog), this protein is Tripartite motif containing 13 (trim13).